We begin with the raw amino-acid sequence, 232 residues long: tRNA (guanine-N(7)-)-methyltransferase (232 aa).

S-adenosyl-L-methionine contacts are provided by glutamate 38, aspartate 63, glutamate 90, and aspartate 113. The active site involves aspartate 113. Substrate contacts are provided by lysine 117 and aspartate 149.

The protein belongs to the class I-like SAM-binding methyltransferase superfamily. TrmB family.

The enzyme catalyses guanosine(46) in tRNA + S-adenosyl-L-methionine = N(7)-methylguanosine(46) in tRNA + S-adenosyl-L-homocysteine. Its pathway is tRNA modification; N(7)-methylguanine-tRNA biosynthesis. Catalyzes the formation of N(7)-methylguanine at position 46 (m7G46) in tRNA. The sequence is that of tRNA (guanine-N(7)-)-methyltransferase from Syntrophotalea carbinolica (strain DSM 2380 / NBRC 103641 / GraBd1) (Pelobacter carbinolicus).